Consider the following 571-residue polypeptide: Potassium-transporting ATPase potassium-binding subunit (571 aa).

10 helical membrane passes run 7-27 (LQFA…GGYL), 66-86 (TYAL…YGIA), 137-157 (GLAV…AALI), 188-208 (FVVA…GFIV), 255-275 (IGNF…CFAF), 286-306 (WAVL…AMSF), 390-410 (VGLN…GLMV), 430-450 (TLYI…SVLI), 497-517 (IGVA…AIAG), and 538-558 (LFVG…FFPA).

It belongs to the KdpA family. The system is composed of three essential subunits: KdpA, KdpB and KdpC.

The protein resides in the cell membrane. Its function is as follows. Part of the high-affinity ATP-driven potassium transport (or Kdp) system, which catalyzes the hydrolysis of ATP coupled with the electrogenic transport of potassium into the cytoplasm. This subunit binds the extracellular potassium ions and delivers the ions to the membrane domain of KdpB through an intramembrane tunnel. The sequence is that of Potassium-transporting ATPase potassium-binding subunit from Mycobacterium bovis (strain ATCC BAA-935 / AF2122/97).